Here is a 217-residue protein sequence, read N- to C-terminus: Pro-Pro endopeptidase (217 aa).

Residues 1 to 27 form the signal peptide; the sequence is MKWDKRVVALILAVMIVCPLFAAPAHA. The region spanning 30-216 is the ATLF-like domain; it reads QSILDKLVVL…TYEFMAKLFA (187 aa). The tract at residues 112 to 115 is plays a crucial role in substrate specificity; it reads SERV. H137 serves as a coordination point for Zn(2+). Residue E138 is the Proton acceptor of the active site. Residues H141, Y174, and E181 each coordinate Zn(2+).

The protein belongs to the peptidase M34 family. Pro-Pro endopeptidase subfamily. Monomer. The cofactor is Zn(2+).

The protein resides in the secreted. The enzyme catalyses The enzyme catalyzes the hydrolytic cleavage of peptide bonds between two proline residues.. Functionally, zinc-dependent endoprotease with a unique preference for proline residues surrounding the scissile bond, which cleaves in a PLP-|-PVP motif. Cleaves the cell surface protein encoded by an adjacent gene, which contains two PPEP-2 cleaving sites and putative extracellular matrix-binding domains. Thereby, may have a role in the regulation of P.alvei adhesion. Is not able to cleave within the PVP-|-PVQ motif, and only shows a very poor cleavage of the VNP-|-PVP motif in vitro, which is the optimal substrate peptide for PPEP-1 from P.difficile. The sequence is that of Pro-Pro endopeptidase from Paenibacillus alvei (strain ATCC 6344 / DSM 29 / NBRC 3343 / NCIMB 9371 / NCTC 6352) (Bacillus alvei).